Here is an 87-residue protein sequence, read N- to C-terminus: MQITDIRIRKVEKEGKMKAVVSITIDDEFVVHDIKVIEGEKGLFIAMPSRKANDGEYRDIAHPINSATRENIQNMILEKYKTEIENV.

Belongs to the SpoVG family.

Could be involved in septation. This chain is Putative septation protein SpoVG, found in Agathobacter rectalis (strain ATCC 33656 / DSM 3377 / JCM 17463 / KCTC 5835 / VPI 0990) (Eubacterium rectale).